Here is a 259-residue protein sequence, read N- to C-terminus: Imidazole glycerol phosphate synthase subunit HisF (259 aa).

Catalysis depends on residues Asp11 and Asp130.

Belongs to the HisA/HisF family. In terms of assembly, heterodimer of HisH and HisF.

The protein resides in the cytoplasm. The catalysed reaction is 5-[(5-phospho-1-deoxy-D-ribulos-1-ylimino)methylamino]-1-(5-phospho-beta-D-ribosyl)imidazole-4-carboxamide + L-glutamine = D-erythro-1-(imidazol-4-yl)glycerol 3-phosphate + 5-amino-1-(5-phospho-beta-D-ribosyl)imidazole-4-carboxamide + L-glutamate + H(+). Its pathway is amino-acid biosynthesis; L-histidine biosynthesis; L-histidine from 5-phospho-alpha-D-ribose 1-diphosphate: step 5/9. IGPS catalyzes the conversion of PRFAR and glutamine to IGP, AICAR and glutamate. The HisF subunit catalyzes the cyclization activity that produces IGP and AICAR from PRFAR using the ammonia provided by the HisH subunit. The sequence is that of Imidazole glycerol phosphate synthase subunit HisF from Shewanella amazonensis (strain ATCC BAA-1098 / SB2B).